The primary structure comprises 373 residues: tRNA-specific 2-thiouridylase MnmA (373 aa).

ATP-binding positions include 12 to 19 (GMSGGVDS) and M38. Positions 98-100 (NPD) are interaction with target base in tRNA. C103 functions as the Nucleophile in the catalytic mechanism. C103 and C200 form a disulfide bridge. Residue G127 coordinates ATP. An interaction with tRNA region spans residues 150 to 152 (KDQ). Residue C200 is the Cysteine persulfide intermediate of the active site. The segment at 312–313 (RY) is interaction with tRNA.

This sequence belongs to the MnmA/TRMU family.

Its subcellular location is the cytoplasm. It carries out the reaction S-sulfanyl-L-cysteinyl-[protein] + uridine(34) in tRNA + AH2 + ATP = 2-thiouridine(34) in tRNA + L-cysteinyl-[protein] + A + AMP + diphosphate + H(+). Catalyzes the 2-thiolation of uridine at the wobble position (U34) of tRNA, leading to the formation of s(2)U34. In Streptococcus agalactiae serotype Ia (strain ATCC 27591 / A909 / CDC SS700), this protein is tRNA-specific 2-thiouridylase MnmA.